The sequence spans 391 residues: Alanine racemase (391 aa).

Catalysis depends on lysine 38, which acts as the Proton acceptor; specific for D-alanine. Lysine 38 carries the N6-(pyridoxal phosphate)lysine modification. Residue arginine 136 participates in substrate binding. Tyrosine 267 serves as the catalytic Proton acceptor; specific for L-alanine. Substrate is bound at residue methionine 315.

It belongs to the alanine racemase family. Pyridoxal 5'-phosphate is required as a cofactor.

The enzyme catalyses L-alanine = D-alanine. It participates in amino-acid biosynthesis; D-alanine biosynthesis; D-alanine from L-alanine: step 1/1. Its function is as follows. Catalyzes the interconversion of L-alanine and D-alanine. May also act on other amino acids. The chain is Alanine racemase (alr) from Clostridium kluyveri (strain ATCC 8527 / DSM 555 / NBRC 12016 / NCIMB 10680 / K1).